Consider the following 677-residue polypeptide: AP-2 complex subunit beta (677 aa).

The tract at residues 597-677 (RLRTRDSNPS…PMTPETHLMD (81 aa)) is disordered. Residues 616 to 627 (KKYNHFHQKSQT) are compositionally biased toward basic residues. Polar residues predominate over residues 636-654 (RNSWNPSPFSDESNSNTFS).

It belongs to the adaptor complexes large subunit family. In terms of assembly, adaptor protein complex 2 (AP-2) is a heterotetramer composed of two large adaptins (alpha-type subunit apl3 and beta-type subunit apl1), a medium chain (mu-type subunit apm4) and a small adaptin (sigma-type subunit aps2).

Its subcellular location is the cell membrane. It is found in the membrane. The protein localises to the coated pit. In terms of biological role, adaptins are components of the adaptor complexes which link clathrin to receptors in coated vesicles. Clathrin-associated protein complexes are believed to interact with the cytoplasmic tails of membrane proteins, leading to their selection and concentration. Beta adaptin is a subunit of the plasma membrane adaptor. The polypeptide is AP-2 complex subunit beta (apl1) (Schizosaccharomyces pombe (strain 972 / ATCC 24843) (Fission yeast)).